Consider the following 467-residue polypeptide: Putative gluconeogenesis factor (467 aa).

The segment covering 1 to 12 has biased composition (pro residues); that stretch reads MSAPPAPPPDRS. The disordered stretch occupies residues 1–27; sequence MSAPPAPPPDRSAPPDRTDSAQTEPTR.

The protein belongs to the gluconeogenesis factor family.

The protein localises to the cytoplasm. Functionally, required for morphogenesis under gluconeogenic growth conditions. The polypeptide is Putative gluconeogenesis factor (Deinococcus radiodurans (strain ATCC 13939 / DSM 20539 / JCM 16871 / CCUG 27074 / LMG 4051 / NBRC 15346 / NCIMB 9279 / VKM B-1422 / R1)).